Here is a 183-residue protein sequence, read N- to C-terminus: Translation initiation factor IF-3 (183 aa).

The protein belongs to the IF-3 family. In terms of assembly, monomer.

The protein localises to the cytoplasm. Its function is as follows. IF-3 binds to the 30S ribosomal subunit and shifts the equilibrium between 70S ribosomes and their 50S and 30S subunits in favor of the free subunits, thus enhancing the availability of 30S subunits on which protein synthesis initiation begins. In Aliivibrio salmonicida (strain LFI1238) (Vibrio salmonicida (strain LFI1238)), this protein is Translation initiation factor IF-3.